Reading from the N-terminus, the 364-residue chain is Glycosyltransferase 8 domain-containing protein 1 (364 aa).

The Cytoplasmic portion of the chain corresponds to 1–5 (MRRVH). Residues 6 to 26 (ITVILLAAVIFLLVLHHNILG) traverse the membrane as a helical; Signal-anchor for type II membrane protein segment. Residues 27–364 (LSDILKRQNS…QFSLIRRHAE (338 aa)) are Lumenal-facing. N-linked (GlcNAc...) asparagine glycans are attached at residues asparagine 102, asparagine 247, and asparagine 255.

Belongs to the glycosyltransferase 8 family.

The protein localises to the membrane. In Xenopus laevis (African clawed frog), this protein is Glycosyltransferase 8 domain-containing protein 1 (glt8d1).